The primary structure comprises 580 residues: V-type proton ATPase catalytic subunit A (580 aa).

Position 209-216 (209-216 (GAFGCGKT)) interacts with ATP.

The protein belongs to the ATPase alpha/beta chains family. In terms of assembly, V-ATPase is a heteromultimeric enzyme composed of a peripheral catalytic V1 complex (main components: subunits A, B, C, D, E, and F) attached to an integral membrane V0 proton pore complex (main component: the proteolipid protein).

It carries out the reaction ATP + H2O + 4 H(+)(in) = ADP + phosphate + 5 H(+)(out). Its function is as follows. Catalytic subunit of the peripheral V1 complex of vacuolar ATPase. V-ATPase vacuolar ATPase is responsible for acidifying a variety of intracellular compartments in eukaryotic cells. In Hordeum vulgare (Barley), this protein is V-type proton ATPase catalytic subunit A.